We begin with the raw amino-acid sequence, 257 residues long: tRNA pseudouridine synthase C (257 aa).

The active site involves D54.

The protein belongs to the pseudouridine synthase RluA family.

The catalysed reaction is uridine(65) in tRNA = pseudouridine(65) in tRNA. Functionally, responsible for synthesis of pseudouridine from uracil-65 in transfer RNAs. The sequence is that of tRNA pseudouridine synthase C (truC) from Yersinia pestis.